The following is an 85-amino-acid chain: MDPKKIARINELAKKKKTEGLTSEEKVEQAKLREEYIEGYRRAVRHHIEGIKIVDEEGNDVTPEKLRQVQREKGLHGRSLDDPNS.

Residues 62–85 are disordered; that stretch reads TPEKLRQVQREKGLHGRSLDDPNS.

Belongs to the UPF0291 family.

The protein resides in the cytoplasm. The protein is UPF0291 protein SPCG_1462 of Streptococcus pneumoniae (strain CGSP14).